The following is a 305-amino-acid chain: MAKSRNPSLGQVSDFDIRLLRIFKTIVECGSFSAAESTLGLSRSAISLHMGDLEKRLGMRLCQRGRAGFALTDEGREVYRATQTLLAALEGFRAEVNDLHQHLRGELNIGIINNLVTLPQMRITHALSALKGQGPQVRINIGMTTPNEIELGVLDGHLHVGVVPLISPLSGLEYLPLYDEHAQLYCSRGHALFERADGDIAVDEVLAADAVAPSYRLPAEAQARHQELNNSASASDREGMAFLILTGNFIGYLPSHYAADWVAAGMLRPLLPERFHYAIALTIVTRKGRRPNLVLERFLEAVAVS.

The region spanning 15–72 is the HTH lysR-type domain; sequence FDIRLLRIFKTIVECGSFSAAESTLGLSRSAISLHMGDLEKRLGMRLCQRGRAGFALT.

Belongs to the LysR transcriptional regulatory family.

Functionally, involved in the degradation of beta-alanine. BauR activates the transcription of the bauABCD operon. This chain is HTH-type transcriptional activator BauR (bauR), found in Pseudomonas aeruginosa (strain ATCC 15692 / DSM 22644 / CIP 104116 / JCM 14847 / LMG 12228 / 1C / PRS 101 / PAO1).